The following is a 723-amino-acid chain: MGLCLRWRRLGFPLPGFRRCELHTVREAPIPTPPHWLAERFGLFEELWTAQVKRLASMTQKKARTIKISLPEGQKVDAVAWNTTPYQLAQQISSTLADTAVAAEVNGELYDLDRPLETDCHLRFLTFDSPEGKAVFWRSSAHVLGAAAEQHLGAVLCRGPSTESGFYLDFFLGKERTVRSTELPTLERICQEIITAAQPFRRLEASRGQLRQLFKDNHFKLHVIEEKVTGTTATVYGCGMSVDLCQGPHLRHTGQIGALKLLTNSSALWRSSEAPETLQRVSGISFPKAELLRNWEARREEAELRDHRRIGKEQELFFFHELSPGSCFFLPRGTRIYNALVAFIRAEYARRGFSEVKTPTLFSTKLWEQSGHWEHYRAHMFSLKPPGTDGVDSSQSGHPARCPKDTLALKPMNCPAHCLMFAHRPRSWRELPVRLADFGVLHRAEASGSLGGLTRLWRFQQDDAHIFCAPSQLEAEIRGCLDFLRSVYSVLGFSFHLALSTRPPGFLGEPHLWDQAEKVLQQALEEFGEPWNLNPGDGAFYGPKIDVHLHDALGRPHQCGTIQLDFQLPLRFDLQYKGPAGAPECPVLIHRAVLGSVERLLGVLAESCGGRWPLWLSPFQVVVIPVRTEQEDYARQVQQCLQAAGLVSDLDADCGLTLSRRVRRAQLAHYNFQFVVGQREQSQMSVNVRTRDNRQLGERGLAESVQRLLELQDARVPNAEELF.

Phosphoserine is present on serine 57. The TGS domain maps to 64–126 (RTIKISLPEG…ETDCHLRFLT (63 aa)).

Belongs to the class-II aminoacyl-tRNA synthetase family. In terms of assembly, homodimer.

The protein localises to the mitochondrion matrix. It catalyses the reaction tRNA(Thr) + L-threonine + ATP = L-threonyl-tRNA(Thr) + AMP + diphosphate + H(+). Catalyzes the attachment of threonine to tRNA(Thr) in a two-step reaction: threonine is first activated by ATP to form Thr-AMP and then transferred to the acceptor end of tRNA(Thr). Also edits incorrectly charged tRNA(Thr) via its editing domain. The sequence is that of Threonine--tRNA ligase, mitochondrial (Tars2) from Rattus norvegicus (Rat).